Here is a 2111-residue protein sequence, read N- to C-terminus: Mycocerosic acid synthase-like polyketide synthase (2111 aa).

An N-terminal signal peptide occupies residues 1–15 (MTQNCVAPVAIIGMA). C16 carries N-palmitoyl cysteine lipidation. C16 carries the S-diacylglycerol cysteine lipid modification. The region spanning 16–428 (CRLPGAINSP…GTNVHAVLEQ (413 aa)) is the Ketosynthase family 3 (KS3) domain. C178 acts as the Acyl-thioester intermediate; for beta-ketoacyl synthase activity in catalysis. Residues H313 and H349 each act as for beta-ketoacyl synthase activity in the active site. Residues 430 to 537 (PESPAETAAE…MPQQAVTNDD (108 aa)) are linker domain (LD). The acyltransferase (AT) stretch occupies residues 538-837 (RGPVWVFSGQ…LAVFAAMRRQ (300 aa)). Residue S629 is the Acyl-ester intermediate; for acyltransferase activity of the active site. Residues 896–1176 (PSVSVHPLLG…LSAMGLQLGT (281 aa)) are dehydratase (DH). The tract at residues 901–1025 (HPLLGSHVVL…GDVDAERPAA (125 aa)) is N-terminal hotdog fold. The 283-residue stretch at 901-1183 (HPLLGSHVVL…LGTGNSDKAE (283 aa)) folds into the PKS/mFAS DH domain. Residue H934 is the Proton acceptor; for dehydratase activity of the active site. A C-terminal hotdog fold region spans residues 1036–1183 (PNRVDGDELR…LGTGNSDKAE (148 aa)). The Proton donor; for dehydratase activity role is filled by D1100. The tract at residues 1215-1391 (SWLVILAGDD…SPEDETAWRD (177 aa)) is pseudo beta-ketoacyl reductase (PsiKR). The interval 1419 to 1743 (EGMRLVVRNP…QHTGKLVIDI (325 aa)) is enoylreductase (ER). A beta-ketoacyl reductase (KR) region spans residues 1765–2008 (GAYVITGGLG…RSPFAELFLA (244 aa)). NADP(+)-binding positions include 1773-1776 (LGGL), 1796-1799 (SRSA), 1824-1825 (DI), and 1902-1903 (FS). The 76-residue stretch at 2029 to 2104 (EEWPTHLRRL…QRLCEMLDTD (76 aa)) folds into the Carrier domain. S2064 carries the O-(pantetheine 4'-phosphoryl)serine modification.

In terms of assembly, homodimer.

Its subcellular location is the cell membrane. It functions in the pathway lipid metabolism; fatty acid biosynthesis. Polyketide synthase involved in the biosynthesis of 2,4-dimethyl-2-eicosenoic acid, a lipid component of the lipooligosaccharides (LOS) which are not located at the bacterial surface but rather in deeper compartments of the cell envelope of M.smegmatis. The chain is Mycocerosic acid synthase-like polyketide synthase from Mycolicibacterium smegmatis (strain ATCC 700084 / mc(2)155) (Mycobacterium smegmatis).